A 302-amino-acid chain; its full sequence is Galactofuranosyltransferase GlfT1 (302 aa).

It belongs to the glycosyltransferase 2 family.

Its subcellular location is the cell membrane. The protein resides in the secreted. It localises to the cell wall. The catalysed reaction is alpha-L-rhamnosyl-(1-&gt;3)-N-acetyl-alpha-D-glucosaminyl-diphospho-trans,octa-cis-decaprenol + 2 UDP-alpha-D-galactofuranose = beta-D-galactofuranosyl-(1-&gt;5)-beta-D-galactofuranosyl-(1-&gt;4)-alpha-L-rhamnosyl-(1-&gt;3)-N-acetyl-alpha-D-glucosaminyl-diphospho-trans,octa-cis-decaprenol + 2 UDP + 2 H(+). It functions in the pathway cell wall biogenesis; cell wall polysaccharide biosynthesis. Functionally, involved in the biosynthesis of the arabinogalactan (AG) region of the mycolylarabinogalactan-peptidoglycan (mAGP) complex, an essential component of the mycobacterial cell wall. Catalyzes the transfer of the first two galactofuranosyl (Galf) units from UDP-galactofuranose (UDP-Galf) onto the rhamnosyl-GlcNAc-diphospho-decaprenol (Rha-GlcNAc-PP-C50) acceptor, yielding galactofuranosyl-galactofuranosyl-rhamnosyl-GlcNAc-diphospho-decaprenol (Galf-Galf-Rha-GlcNAc-PP-C50). Thus, GlfT1 is the initiator of galactan synthesis, while GlfT2 continues with the subsequent polymerization events. In Mycolicibacterium smegmatis (strain ATCC 700084 / mc(2)155) (Mycobacterium smegmatis), this protein is Galactofuranosyltransferase GlfT1.